Reading from the N-terminus, the 309-residue chain is Acetolactate synthase small subunit, mitochondrial (309 aa).

Residues 1-24 (MLRSLLQSGHRRVVASSCATMVRC) constitute a mitochondrion transit peptide. An ACT domain is found at 79 to 159 (VLNCLVQNEP…DYTNSEIIKR (81 aa)).

This sequence belongs to the acetolactate synthase small subunit family. In terms of assembly, the acetolactate synthase complex contains the catalytic regulatory subunit ILV2 and the regulatory small subunit ILV6.

It is found in the mitochondrion. It functions in the pathway amino-acid biosynthesis; L-isoleucine biosynthesis; L-isoleucine from 2-oxobutanoate: step 1/4. The protein operates within amino-acid biosynthesis; L-valine biosynthesis; L-valine from pyruvate: step 1/4. Functionally, regulatory subunit of mitochondrial acetolactate synthase, which catalyzes the first of a series of common steps in the biosynthesis of the branched-chain amino acids. Stimulates activity of the acetolactate synthase catalytic subunit ILV2 seven- to tenfold and confers sensitivity to inhibition by valine and activation by ATP. This Saccharomyces cerevisiae (strain ATCC 204508 / S288c) (Baker's yeast) protein is Acetolactate synthase small subunit, mitochondrial (ILV6).